The primary structure comprises 260 residues: Neuraminyllactose-binding hemagglutinin (260 aa).

An N-terminal signal peptide occupies residues 1 to 27 (MKTNGHFKDFAWKKCFLGASVVALLVG). Cys-28 is lipidated: N-palmitoyl cysteine. The S-diacylglycerol cysteine moiety is linked to residue Cys-28.

Its subcellular location is the cell outer membrane. The chain is Neuraminyllactose-binding hemagglutinin (hpaA) from Helicobacter pylori (strain J99 / ATCC 700824) (Campylobacter pylori J99).